We begin with the raw amino-acid sequence, 418 residues long: Glutamyl-tRNA reductase (418 aa).

Residues 49–52 (TCNR), Ser-109, 114–116 (EPQ), and Gln-120 each bind substrate. Cys-50 functions as the Nucleophile in the catalytic mechanism. 189-194 (GAGETI) contributes to the NADP(+) binding site.

It belongs to the glutamyl-tRNA reductase family. In terms of assembly, homodimer.

It catalyses the reaction (S)-4-amino-5-oxopentanoate + tRNA(Glu) + NADP(+) = L-glutamyl-tRNA(Glu) + NADPH + H(+). It functions in the pathway porphyrin-containing compound metabolism; protoporphyrin-IX biosynthesis; 5-aminolevulinate from L-glutamyl-tRNA(Glu): step 1/2. Functionally, catalyzes the NADPH-dependent reduction of glutamyl-tRNA(Glu) to glutamate 1-semialdehyde (GSA). The polypeptide is Glutamyl-tRNA reductase (Salmonella heidelberg (strain SL476)).